The following is a 92-amino-acid chain: DNA-directed RNA polymerase subunit omega (92 aa).

The protein belongs to the RNA polymerase subunit omega family. In terms of assembly, the RNAP catalytic core consists of 2 alpha, 1 beta, 1 beta' and 1 omega subunit. When a sigma factor is associated with the core the holoenzyme is formed, which can initiate transcription.

The catalysed reaction is RNA(n) + a ribonucleoside 5'-triphosphate = RNA(n+1) + diphosphate. Its function is as follows. Promotes RNA polymerase assembly. Latches the N- and C-terminal regions of the beta' subunit thereby facilitating its interaction with the beta and alpha subunits. This Acinetobacter baumannii (strain AB307-0294) protein is DNA-directed RNA polymerase subunit omega.